The following is a 51-amino-acid chain: Large ribosomal subunit protein eL39 (51 aa).

Positions 1–15 are enriched in basic residues; the sequence is MPSHKSFRTKQKLAK. Residues 1-21 form a disordered region; the sequence is MPSHKSFRTKQKLAKAARQNR.

Belongs to the eukaryotic ribosomal protein eL39 family. In terms of assembly, component of the large ribosomal subunit (LSU). Mature yeast ribosomes consist of a small (40S) and a large (60S) subunit. The 40S small subunit contains 1 molecule of ribosomal RNA (18S rRNA) and at least 33 different proteins. The large 60S subunit contains 3 rRNA molecules (25S, 5.8S and 5S rRNA) and at least 46 different proteins. eL39 interacts with yih1.

Its subcellular location is the cytoplasm. Functionally, component of the ribosome, a large ribonucleoprotein complex responsible for the synthesis of proteins in the cell. The small ribosomal subunit (SSU) binds messenger RNAs (mRNAs) and translates the encoded message by selecting cognate aminoacyl-transfer RNA (tRNA) molecules. The large subunit (LSU) contains the ribosomal catalytic site termed the peptidyl transferase center (PTC), which catalyzes the formation of peptide bonds, thereby polymerizing the amino acids delivered by tRNAs into a polypeptide chain. The nascent polypeptides leave the ribosome through a tunnel in the LSU and interact with protein factors that function in enzymatic processing, targeting, and the membrane insertion of nascent chains at the exit of the ribosomal tunnel. This is Large ribosomal subunit protein eL39 (rpl39) from Schizosaccharomyces pombe (strain 972 / ATCC 24843) (Fission yeast).